The sequence spans 240 residues: Glutathione S-transferase theta-1 (240 aa).

The 81-residue stretch at 2–82 (VLELYLDLLS…YLAHKYKVPD (81 aa)) folds into the GST N-terminal domain. Residues His40, 53–54 (RV), and 66–67 (ES) contribute to the glutathione site. The region spanning 88-222 (DLQARARVDE…VILKVKDCPP (135 aa)) is the GST C-terminal domain.

The protein belongs to the GST superfamily. Theta family. Homodimer. In terms of tissue distribution, in liver, highest expression found in central vein limiting plate hepatocytes. Also expressed in interlobular bile duct epithelial cells. In lung, expressed in club cells and ciliated cells of the bronchiolar epithelium and in type II alveolar cells of the lung parenchyma.

It is found in the cytoplasm. Its subcellular location is the nucleus. The catalysed reaction is RX + glutathione = an S-substituted glutathione + a halide anion + H(+). In terms of biological role, conjugation of reduced glutathione to a wide number of exogenous and endogenous hydrophobic electrophiles. Also binds steroids, bilirubin, carcinogens and numerous organic anions. Has dichloromethane dehalogenase activity. This Mus musculus (Mouse) protein is Glutathione S-transferase theta-1 (Gstt1).